A 259-amino-acid chain; its full sequence is Probable ABC transporter permease protein RF_0080 (259 aa).

Helical transmembrane passes span 13-35, 49-69, 148-168, 195-215, and 237-257; these read TIKF…SSII, LFIG…SGAV, VIAA…IGVM, PIDV…ISII, and AVVN…ELFF.

It belongs to the MlaE permease family.

It is found in the cell inner membrane. Functionally, could be part of an ABC transporter complex. The chain is Probable ABC transporter permease protein RF_0080 from Rickettsia felis (strain ATCC VR-1525 / URRWXCal2) (Rickettsia azadi).